The sequence spans 561 residues: Putative transport protein CKO_02260 (561 aa).

5 consecutive transmembrane segments (helical) span residues 8 to 28, 32 to 52, 66 to 86, 94 to 114, and 158 to 178; these read LLNG…LCLG, LGSV…LLGQ, FMLF…SIFF, MLAL…GKLF, and NLSL…IVGA. RCK C-terminal domains follow at residues 200–288 and 292–373; these read RGLD…SFRN and VFDR…RIGF. A run of 5 helical transmembrane segments spans residues 383 to 403, 406 to 426, 447 to 467, 475 to 495, and 540 to 560; these read LLAF…TFQF, FSFG…LGFL, FGLM…IGNG, MLIA…LFGA, and AIAN…WPGL.

Belongs to the AAE transporter (TC 2.A.81) family. YbjL subfamily.

Its subcellular location is the cell membrane. This chain is Putative transport protein CKO_02260, found in Citrobacter koseri (strain ATCC BAA-895 / CDC 4225-83 / SGSC4696).